An 88-amino-acid polypeptide reads, in one-letter code: MANIKSQKKRILTNEKARQRNVAVKSELKTAIRAVDKAVAAGEAEAAAAALRTASRKLDKAASKGVIHKNQAANRKSGIAARVKALLG.

Belongs to the bacterial ribosomal protein bS20 family.

Binds directly to 16S ribosomal RNA. In Micrococcus luteus (strain ATCC 4698 / DSM 20030 / JCM 1464 / CCM 169 / CCUG 5858 / IAM 1056 / NBRC 3333 / NCIMB 9278 / NCTC 2665 / VKM Ac-2230) (Micrococcus lysodeikticus), this protein is Small ribosomal subunit protein bS20.